The primary structure comprises 323 residues: tRNA (guanine(9)-N1)-methyltransferase (323 aa).

Over residues 1–16 the composition is skewed to polar residues; that stretch reads MTEQTSEATVVNNSPA. Disordered regions lie at residues 1–34 and 192–215; these read MTEQ…EIEE and TGAP…NSTD. The span at 25-34 shows a compositional bias: basic and acidic residues; it reads EKPTPEEIEE. Residues 99-319 form the SAM-dependent MTase TRM10-type domain; it reads KAQPIPSRQI…KVLPPRKIKS (221 aa). Residues 204 to 215 show a composition bias toward low complexity; the sequence is GNSNSNTTNSTD. Residues 225 to 226, G245, 249 to 253, C257, L271, and 283 to 285 contribute to the S-adenosyl-L-methionine site; these read LT, DKNRH, and HVL. D249 (proton acceptor) is an active-site residue.

The protein belongs to the class IV-like SAM-binding methyltransferase superfamily. TRM10 family. Monomer.

The protein localises to the cytoplasm. It is found in the nucleus. It catalyses the reaction guanosine(9) in tRNA + S-adenosyl-L-methionine = N(1)-methylguanosine(9) in tRNA + S-adenosyl-L-homocysteine + H(+). In terms of biological role, S-adenosyl-L-methionine-dependent guanine N(1)-methyltransferase that catalyzes the formation of N(1)-methylguanine at position 9 (m1G9) in cytoplasmic tRNA. The chain is tRNA (guanine(9)-N1)-methyltransferase from Candida albicans (strain SC5314 / ATCC MYA-2876) (Yeast).